Reading from the N-terminus, the 383-residue chain is Acetylornithine deacetylase (383 aa).

H80 lines the Zn(2+) pocket. Residue D82 is part of the active site. Zn(2+) is bound at residue D112. The active site involves E144. Zn(2+) contacts are provided by E145, E169, and H355.

Belongs to the peptidase M20A family. ArgE subfamily. As to quaternary structure, homodimer. The cofactor is Zn(2+). Co(2+) is required as a cofactor. It depends on glutathione as a cofactor.

The protein resides in the cytoplasm. It carries out the reaction N(2)-acetyl-L-ornithine + H2O = L-ornithine + acetate. The protein operates within amino-acid biosynthesis; L-arginine biosynthesis; L-ornithine from N(2)-acetyl-L-ornithine (linear): step 1/1. Catalyzes the hydrolysis of the amide bond of N(2)-acetylated L-amino acids. Cleaves the acetyl group from N-acetyl-L-ornithine to form L-ornithine, an intermediate in L-arginine biosynthesis pathway, and a branchpoint in the synthesis of polyamines. The polypeptide is Acetylornithine deacetylase (Escherichia coli O9:H4 (strain HS)).